Here is a 539-residue protein sequence, read N- to C-terminus: Peptide chain release factor 3 (539 aa).

The 270-residue stretch at Glu14–Glu283 folds into the tr-type G domain. GTP is bound by residues Ser23–Thr30, Asp91–His95, and Asn145–Asp148.

It belongs to the TRAFAC class translation factor GTPase superfamily. Classic translation factor GTPase family. PrfC subfamily.

The protein resides in the cytoplasm. Functionally, increases the formation of ribosomal termination complexes and stimulates activities of RF-1 and RF-2. It binds guanine nucleotides and has strong preference for UGA stop codons. It may interact directly with the ribosome. The stimulation of RF-1 and RF-2 is significantly reduced by GTP and GDP, but not by GMP. The chain is Peptide chain release factor 3 from Rippkaea orientalis (strain PCC 8801 / RF-1) (Cyanothece sp. (strain PCC 8801)).